Reading from the N-terminus, the 113-residue chain is Heavy metal-associated isoprenylated plant protein 15 (113 aa).

An HMA domain is found at 1 to 65; sequence MIVWMGVYDQ…KWGKAKLTLY (65 aa). Positions 69 to 89 form a coiled coil; that stretch reads DALKEAKIAEAKQKREEIERE. C110 bears the Cysteine methyl ester mark. The S-farnesyl cysteine moiety is linked to residue C110. A propeptide spans 111–113 (removed in mature form); sequence VIC.

The protein belongs to the HIPP family. Expressed in embryo sacs.

Functionally, probable heavy-metal-binding protein. The polypeptide is Heavy metal-associated isoprenylated plant protein 15 (Arabidopsis thaliana (Mouse-ear cress)).